Reading from the N-terminus, the 821-residue chain is BDNF/NT-3 growth factors receptor (821 aa).

The N-terminal stretch at 1 to 31 is a signal peptide; sequence MSPWLKWHGPAMARLWGLCLLVLGFWRASLA. 2 cysteine pairs are disulfide-bonded: Cys32–Cys38 and Cys36–Cys45. The LRRNT domain maps to 32–61; that stretch reads CPTSCKCSSARIWCTEPSPGIVAFPRLEPN. The Extracellular segment spans residues 32 to 429; that stretch reads CPTSCKCSSA…DVADQSNREH (398 aa). Asn67, Asn95, and Asn121 each carry an N-linked (GlcNAc...) asparagine glycan. LRR repeat units lie at residues 92–113 and 116–137; these read GLRNLTIVDSGLKFVAYKAFLK and NLRHINFTRNKLTSLSRRHFRH. Positions 148 to 196 constitute an LRRCT domain; the sequence is NPFTCSCDIMWLKTLQETKSSPDTQDLYCLNESSKNMPLANLQIPNCGL. 2 disulfide bridges follow: Cys152/Cys176 and Cys154/Cys194. N-linked (GlcNAc...) asparagine glycans are attached at residues Asn178, Asn205, Asn241, Asn254, Asn280, Asn325, Asn338, Asn350, and Asn411. Ig-like C2-type domains are found at residues 197-282 and 301-365; these read PSAR…VNLT and WCIP…MAKN. Cys218 and Cys266 are disulfide-bonded. Residues Cys302 and Cys345 are joined by a disulfide bond. Residues 430 to 453 traverse the membrane as a helical segment; that stretch reads LSVYAVVVIASVVGFCLLVMLLLL. Positions 454 to 465 are interaction with MAPK8IP3/JIP3; the sequence is KLARHSKFGMKG. The Cytoplasmic segment spans residues 454–821; that stretch reads KLARHSKFGM…ASPVYLDILG (368 aa). Residues 474–497 are disordered; the sequence is DDSASPLHHISNGSNTPSSSEGGP. Residues 484–494 show a composition bias toward polar residues; the sequence is SNGSNTPSSSE. Tyr515 carries the post-translational modification Phosphotyrosine. In terms of domain architecture, Protein kinase spans 537–806; that stretch reads IVLKRELGEG…KNIKSIHTLL (270 aa). ATP contacts are provided by residues 543–551 and Lys571; that span reads LGEGAFGKV. Asp675 functions as the Proton acceptor in the catalytic mechanism. Phosphotyrosine; by autocatalysis occurs at positions 701, 705, 706, and 816.

Belongs to the protein kinase superfamily. Tyr protein kinase family. Insulin receptor subfamily. Exists in a dynamic equilibrium between monomeric (low affinity) and dimeric (high affinity) structures. Interacts (phosphorylated upon activation by BDNF) with SHC1; mediates SHC1 phosphorylation and activation. Interacts (phosphorylated upon activation by BDNF) with PLCG1 and/or PLCG2; mediates PLCG1 phosphorylation and activation. Interacts with SH2B1 and SH2B2. Interacts with NGFR; may regulate the ligand specificity of the receptor. Interacts with SORCS2; this interaction is important for normal targeting to post-synaptic densities in response to high-frequency stimulation. Interacts (phosphorylated upon ligand-binding) with SH2D1A; regulates NTRK2. Interacts with SQSTM1 and KIDINS220. Interacts (phosphorylated upon ligand-binding) with FRS2; activates the MAPK signaling pathway. Interacts with APPL1. Interacts with MAPK8IP3/JIP3 and KLC1; interaction with KLC1 is mediated by MAPK8IP3/JIP3. Interacts with SORL1; this interaction facilitates NTRK2 trafficking between synaptic plasma membranes, postsynaptic densities and cell soma, hence positively regulates BDNF signaling. Interacts with SLITRK2. Post-translationally, phosphorylated. Undergoes ligand-mediated autophosphorylation that is required for interaction with SHC1 and PLCG1 and other downstream effectors. Some isoforms are not phosphorylated. Ubiquitinated. Undergoes polyubiquitination upon activation; regulated by NGFR. Ubiquitination regulates the internalization of the receptor. In terms of tissue distribution, expressed in the brain, in neurons (at protein level). Detected in hippocampus (at protein level). Widely expressed in the central and peripheral nervous system. The different forms are differentially expressed in various cell types. Isoform GP95-TRKB is specifically expressed in glial cells.

It localises to the cell membrane. It is found in the endosome membrane. The protein localises to the early endosome membrane. Its subcellular location is the cell projection. The protein resides in the axon. It localises to the dendrite. It is found in the cytoplasm. The protein localises to the perinuclear region. Its subcellular location is the postsynaptic density. It catalyses the reaction L-tyrosyl-[protein] + ATP = O-phospho-L-tyrosyl-[protein] + ADP + H(+). Its activity is regulated as follows. The formation of active receptors dimers able to fully transduce the ligand-mediated signal, may be negatively regulated by the formation of inactive heterodimers with the non-catalytic isoforms. The neuronal activity and the influx of calcium positively regulate the kinase activity and the internalization of the receptor which are both important for active signaling. Regulated by NGFR that may control the internalization of the receptor. NGFR may also stimulate the activation by BDNF compared to NTF3 and NTF4. SH2D1A inhibits the autophosphorylation of the receptor, and alters the recruitment and activation of downstream effectors and signaling cascades. Its function is as follows. Receptor tyrosine kinase involved in the development and the maturation of the central and the peripheral nervous systems through regulation of neuron survival, proliferation, migration, differentiation, and synapse formation and plasticity. Receptor for BDNF/brain-derived neurotrophic factor and NTF4/neurotrophin-4. Alternatively can also bind NTF3/neurotrophin-3 which is less efficient in activating the receptor but regulates neuron survival through NTRK2. Upon ligand-binding, undergoes homodimerization, autophosphorylation and activation. Recruits, phosphorylates and/or activates several downstream effectors including SHC1, FRS2, SH2B1, SH2B2 and PLCG1 that regulate distinct overlapping signaling cascades. Through SHC1, FRS2, SH2B1, SH2B2 activates the GRB2-Ras-MAPK cascade that regulates for instance neuronal differentiation including neurite outgrowth. Through the same effectors controls the Ras-PI3 kinase-AKT1 signaling cascade that mainly regulates growth and survival. Through PLCG1 and the downstream protein kinase C-regulated pathways controls synaptic plasticity. Thereby, plays a role in learning and memory by regulating both short term synaptic function and long-term potentiation. PLCG1 also leads to NF-Kappa-B activation and the transcription of genes involved in cell survival. Hence, it is able to suppress anoikis, the apoptosis resulting from loss of cell-matrix interactions. Isoform GP95-TRKB may also play a role in neutrophin-dependent calcium signaling in glial cells and mediate communication between neurons and glia. This is BDNF/NT-3 growth factors receptor from Mus musculus (Mouse).